The chain runs to 95 residues: uncharacterized protein (95 aa).

The signal sequence occupies residues methionine 1–valine 21.

This is an uncharacterized protein from Archaeoglobus fulgidus (strain ATCC 49558 / DSM 4304 / JCM 9628 / NBRC 100126 / VC-16).